Consider the following 263-residue polypeptide: Imidazole glycerol phosphate synthase subunit HisF (263 aa).

Catalysis depends on residues Asp-11 and Asp-131.

It belongs to the HisA/HisF family. Heterodimer of HisH and HisF.

The protein localises to the cytoplasm. The catalysed reaction is 5-[(5-phospho-1-deoxy-D-ribulos-1-ylimino)methylamino]-1-(5-phospho-beta-D-ribosyl)imidazole-4-carboxamide + L-glutamine = D-erythro-1-(imidazol-4-yl)glycerol 3-phosphate + 5-amino-1-(5-phospho-beta-D-ribosyl)imidazole-4-carboxamide + L-glutamate + H(+). Its pathway is amino-acid biosynthesis; L-histidine biosynthesis; L-histidine from 5-phospho-alpha-D-ribose 1-diphosphate: step 5/9. Its function is as follows. IGPS catalyzes the conversion of PRFAR and glutamine to IGP, AICAR and glutamate. The HisF subunit catalyzes the cyclization activity that produces IGP and AICAR from PRFAR using the ammonia provided by the HisH subunit. This Deinococcus geothermalis (strain DSM 11300 / CIP 105573 / AG-3a) protein is Imidazole glycerol phosphate synthase subunit HisF.